The sequence spans 252 residues: Phosphate import ATP-binding protein PstB (252 aa).

Residues 6 to 247 (ISAENLNLFY…PKDQRTEDYI (242 aa)) enclose the ABC transporter domain. Position 38 to 45 (38 to 45 (GPSGCGKS)) interacts with ATP.

Belongs to the ABC transporter superfamily. Phosphate importer (TC 3.A.1.7) family. In terms of assembly, the complex is composed of two ATP-binding proteins (PstB), two transmembrane proteins (PstC and PstA) and a solute-binding protein (PstS).

It localises to the cell membrane. It catalyses the reaction phosphate(out) + ATP + H2O = ADP + 2 phosphate(in) + H(+). In terms of biological role, part of the ABC transporter complex PstSACB involved in phosphate import. Responsible for energy coupling to the transport system. The sequence is that of Phosphate import ATP-binding protein PstB from Heliobacterium mobile (Heliobacillus mobilis).